Reading from the N-terminus, the 794-residue chain is Interphotoreceptor matrix proteoglycan 1 (794 aa).

The signal sequence occupies residues 1–20 (MHLEAARVIFFLWIFLQVQG). Over residues 202-213 (MTTAQRNPQLHP) the composition is skewed to polar residues. Disordered regions lie at residues 202 to 221 (MTTAQRNPQLHPSRTPRVPT), 314 to 355 (KGKA…LYPT), and 413 to 449 (SPELPLGQPRLETVDRAGHSPPGASPTDGWSPPAMTS). An SEA 1 domain is found at 236–357 (LEQKVELSIS…KQRELYPTAS (122 aa)). The segment covering 332–351 (NKIESEGDPRGTTEEEKQRE) has biased composition (basic and acidic residues). 2 O-linked (GalNAc...) threonine glycosylation sites follow: T425 and T439. S443 is a glycosylation site (O-linked (GalNAc...) serine). Residues T448 and T450 are each glycosylated (O-linked (GalNAc...) threonine). Positions 579–692 (RELVVFFSLR…YSLDVEPADQ (114 aa)) constitute an SEA 2 domain. N-linked (GlcNAc...) asparagine glycosylation occurs at N624. The short motif at 629–637 (KQLEILNFR) is the Heparin- and hyaluronan-binding element. Residue N656 is glycosylated (N-linked (GlcNAc...) asparagine).

In terms of processing, highly glycosylated (N- and O-linked carbohydrates and sialic acid).

It is found in the cell projection. The protein localises to the cilium. Its subcellular location is the photoreceptor outer segment. The protein resides in the secreted. It localises to the extracellular space. It is found in the extracellular matrix. The protein localises to the interphotoreceptor matrix. Its subcellular location is the photoreceptor inner segment. Chondroitin sulfate-, heparin- and hyaluronan-binding protein. May serve to form a basic macromolecular scaffold comprising the insoluble interphotoreceptor matrix. The chain is Interphotoreceptor matrix proteoglycan 1 (IMPG1) from Bos taurus (Bovine).